Consider the following 436-residue polypeptide: AMSH-like protease (436 aa).

Met-1 carries the post-translational modification N-acetylmethionine. A phosphoserine mark is found at Ser-25 and Ser-242. The MPN domain occupies 269-397 (VVLSRDLCHK…IFRLTNAGML (129 aa)). The Zn(2+) site is built by His-347, His-349, Asp-360, His-362, Cys-402, His-408, and His-410. Positions 347–360 (HTHPTQTAFLSSVD) match the JAMM motif motif.

This sequence belongs to the peptidase M67C family. Zn(2+) serves as cofactor. In terms of tissue distribution, ubiquitously expressed. Isoform 1 is widely expressed while isoform 2 is testis-specific.

In terms of biological role, zinc metalloprotease that specifically cleaves 'Lys-63'-linked polyubiquitin chains. Acts as a positive regulator of the TORC1 signaling pathway by mediating 'Lys-63'-linked deubiquitination of SESN2, thereby inhibiting SESN2-interaction with the GATOR2 complex. Does not cleave 'Lys-48'-linked polyubiquitin chains. This chain is AMSH-like protease (Stambpl1), found in Mus musculus (Mouse).